A 142-amino-acid chain; its full sequence is uncharacterized protein (142 aa).

Positions 1–26 (MITEFIKSFLLFFFLPFFLSMPMIFA) are cleaved as a signal peptide.

This is an uncharacterized protein from Schizosaccharomyces pombe (strain 972 / ATCC 24843) (Fission yeast).